A 413-amino-acid chain; its full sequence is Cardiolipin synthase B (413 aa).

2 consecutive PLD phosphodiesterase domains span residues 108 to 135 (IFRRMHRKIVVIDDRIAFVGGINYSAEH) and 285 to 312 (RRRPLHGKVALMDDHWATVGSSNLDPLS). Active-site residues include His-113, Lys-115, Asp-120, His-290, Lys-292, and Asp-297. Residues 388-413 (AQVPPPAQPEMETQDRVDPENTGVKP) are disordered.

This sequence belongs to the phospholipase D family. Cardiolipin synthase subfamily. ClsB sub-subfamily.

It localises to the cell membrane. The catalysed reaction is 2 a 1,2-diacyl-sn-glycero-3-phospho-(1'-sn-glycerol) = a cardiolipin + glycerol. Catalyzes the phosphatidyl group transfer from one phosphatidylglycerol molecule to another to form cardiolipin (CL) (diphosphatidylglycerol) and glycerol. The polypeptide is Cardiolipin synthase B (Salmonella typhimurium (strain LT2 / SGSC1412 / ATCC 700720)).